The chain runs to 311 residues: Putative ankyrin repeat protein RF_0923 (311 aa).

ANK repeat units lie at residues 42 to 71, 77 to 106, 112 to 141, 147 to 176, and 182 to 213; these read IDNTALIWAVDKGLEKVCEMLIPKMSEQAI, NGNTALTLAASKGLEKICELLIPKMSPQAI, NGNTALTWAAWKDLEKICEMLIPKMSPQAI, NGNTALILAAWKGLEKICKILIPKMFEQAI, and KGCTALTLAADKDLKKIYELLINKMSIDAINH.

The chain is Putative ankyrin repeat protein RF_0923 from Rickettsia felis (strain ATCC VR-1525 / URRWXCal2) (Rickettsia azadi).